The sequence spans 138 residues: Protein SPMIP3 (138 aa).

This chain is Protein SPMIP3 (SPMIP3), found in Bos taurus (Bovine).